The chain runs to 321 residues: Glucokinase (321 aa).

Gly8–Thr13 is a binding site for ATP.

The protein belongs to the bacterial glucokinase family.

It is found in the cytoplasm. It catalyses the reaction D-glucose + ATP = D-glucose 6-phosphate + ADP + H(+). Not highly important in E.coli as glucose is transported into the cell by the PTS system already as glucose 6-phosphate. This Escherichia coli O139:H28 (strain E24377A / ETEC) protein is Glucokinase.